The sequence spans 475 residues: Ribulose bisphosphate carboxylase large chain (475 aa).

A propeptide spanning residues 1–2 (MS) is cleaved from the precursor. Pro-3 is modified (N-acetylproline). Lys-14 bears the N6,N6,N6-trimethyllysine mark. Substrate is bound by residues Asn-123 and Thr-173. The active-site Proton acceptor is the Lys-175. Lys-177 contacts substrate. The Mg(2+) site is built by Lys-201, Asp-203, and Glu-204. At Lys-201 the chain carries N6-carboxylysine. His-294 functions as the Proton acceptor in the catalytic mechanism. Residues Arg-295, His-327, and Ser-379 each coordinate substrate.

The protein belongs to the RuBisCO large chain family. Type I subfamily. In terms of assembly, heterohexadecamer of 8 large chains and 8 small chains; disulfide-linked. The disulfide link is formed within the large subunit homodimers. Requires Mg(2+) as cofactor. The disulfide bond which can form in the large chain dimeric partners within the hexadecamer appears to be associated with oxidative stress and protein turnover.

It localises to the plastid. Its subcellular location is the chloroplast. It carries out the reaction 2 (2R)-3-phosphoglycerate + 2 H(+) = D-ribulose 1,5-bisphosphate + CO2 + H2O. The catalysed reaction is D-ribulose 1,5-bisphosphate + O2 = 2-phosphoglycolate + (2R)-3-phosphoglycerate + 2 H(+). Functionally, ruBisCO catalyzes two reactions: the carboxylation of D-ribulose 1,5-bisphosphate, the primary event in carbon dioxide fixation, as well as the oxidative fragmentation of the pentose substrate in the photorespiration process. Both reactions occur simultaneously and in competition at the same active site. This chain is Ribulose bisphosphate carboxylase large chain (rbcL), found in Marchantia polymorpha (Common liverwort).